The chain runs to 287 residues: Phospholipase A and acyltransferase 5 (287 aa).

Disordered stretches follow at residues 48–72 and 86–138; these read PKQI…ASSQ and DRGL…SNQK. 2 stretches are compositionally biased toward polar residues: residues 49–72 and 128–138; these read KQIS…ASSQ and LKNQAAESNQK. The LRAT domain maps to 144 to 257; sequence LIEIFRIGYE…LRYGVPRSQQ (114 aa). Residues histidine 154 and histidine 166 contribute to the active site. Cysteine 241 (acyl-thioester intermediate) is an active-site residue.

Belongs to the H-rev107 family. In terms of tissue distribution, expressed in testis.

The protein resides in the cytoplasm. The protein localises to the cytosol. The catalysed reaction is a 1,2-diacyl-sn-glycero-3-phosphocholine + H2O = a 1-acyl-sn-glycero-3-phosphocholine + a fatty acid + H(+). It carries out the reaction a 1,2-diacyl-sn-glycero-3-phosphocholine + H2O = a 2-acyl-sn-glycero-3-phosphocholine + a fatty acid + H(+). It catalyses the reaction 1-hexadecanoyl-2-(5Z,8Z,11Z,14Z-eicosatetraenoyl)-sn-glycero-3-phosphocholine + 1,2-di-(9Z-octadecenoyl)-sn-glycero-3-phosphoethanolamine = N-(5Z,8Z,11Z,14Z-eicosatetraenoyl)-1,2-di-(9Z-octadecenoyl)-sn-glycero-3-phosphoethanolamine + 1-hexadecanoyl-sn-glycero-3-phosphocholine + H(+). The enzyme catalyses 1,2-di-(9Z-octadecenoyl)-sn-glycero-3-phosphoethanolamine + 1,2-dihexadecanoyl-sn-glycero-3-phosphocholine = N-hexadecanoyl-1,2-di-(9Z-octadecenoyl)-sn-glycero-3-phosphoethanolamine + 1-hexadecanoyl-sn-glycero-3-phosphocholine + H(+). The catalysed reaction is 1,2-di-(9Z-octadecenoyl)-sn-glycero-3-phosphoethanolamine + 1,2-dihexadecanoyl-sn-glycero-3-phosphocholine = N-hexadecanoyl-1,2-di-(9Z-octadecenoyl)-sn-glycero-3-phosphoethanolamine + 2-hexadecanoyl-sn-glycero-3-phosphocholine + H(+). It carries out the reaction a 1,2-diacyl-sn-glycero-3-phosphoethanolamine + a 1,2-diacyl-sn-glycero-3-phosphocholine = an N-acyl-1,2-diacyl-sn-glycero-3-phosphoethanolamine + a 1-acyl-sn-glycero-3-phosphocholine + H(+). It catalyses the reaction a 1,2-diacyl-sn-glycero-3-phosphoethanolamine + a 1,2-diacyl-sn-glycero-3-phosphocholine = an N-acyl-1,2-diacyl-sn-glycero-3-phosphoethanolamine + a 2-acyl-sn-glycero-3-phosphocholine + H(+). The enzyme catalyses 1-hexadecanoyl-2-(9Z-octadecenoyl)-sn-glycero-3-phosphocholine + 1,2-di-(9Z-octadecenoyl)-sn-glycero-3-phosphoethanolamine = N,1,2-tri-(9Z-octadecenoyl)-sn-glycero-3-phosphoethanolamine + 1-hexadecanoyl-sn-glycero-3-phosphocholine + H(+). In terms of biological role, exhibits both phospholipase A1/2 and acyltransferase activities. Shows phospholipase A1 (PLA1) and A2 (PLA2) activity, catalyzing the calcium-independent release of fatty acids from the sn-1 or sn-2 position of glycerophospholipids. Shows N-acyltransferase activity, catalyzing the calcium-independent transfer of a fatty acyl group at the sn-1 position of phosphatidylcholine (PC) and other glycerophospholipids to the primary amine of phosphatidylethanolamine (PE), forming N-acylphosphatidylethanolamine (NAPE), which serves as precursor for N-acylethanolamines (NAEs). In Rattus norvegicus (Rat), this protein is Phospholipase A and acyltransferase 5.